The chain runs to 517 residues: Ubiquitin carboxyl-terminal hydrolase 30 (517 aa).

The Mitochondrial intermembrane segment spans residues 1-35 (MLSSRAQAARTAADKALQRFLRTGAAVRYKVMKNW). A helical membrane pass occupies residues 36 to 56 (GVIGGIAAALAAGIYVIWGPI). The Cytoplasmic segment spans residues 57–517 (TERKKRRKGL…QQGREYRSEE (461 aa)). The 435-residue stretch at 68–502 (PGLVNLGNTC…SAYLLFYERV (435 aa)) folds into the USP domain. C77 functions as the Nucleophile in the catalytic mechanism. The disordered stretch occupies residues 198 to 221 (MAPRQVTCHTRGSPHPTTNHWKSQ). The span at 204–218 (TCHTRGSPHPTTNHW) shows a compositional bias: polar residues. Glycyl lysine isopeptide (Lys-Gly) (interchain with G-Cter in ubiquitin) cross-links involve residues K235 and K289. Residues 364–395 (SQHGPKATENPGSAPEVQDAQAAPKPGLSQPG) are disordered. The Proton acceptor role is filled by H452.

Belongs to the peptidase C19 family. In terms of processing, ubiquitinated by parkin (PRKN) at Lys-235 and Lys-289, leading to its degradation.

The protein resides in the mitochondrion outer membrane. It carries out the reaction Thiol-dependent hydrolysis of ester, thioester, amide, peptide and isopeptide bonds formed by the C-terminal Gly of ubiquitin (a 76-residue protein attached to proteins as an intracellular targeting signal).. With respect to regulation, inhibited by the diterpenoid derivative 15-oxospiramilactone (S3). Deubiquitinating enzyme tethered to the mitochondrial outer membrane that acts as a key inhibitor of mitophagy by counteracting the action of parkin (PRKN): hydrolyzes ubiquitin attached by parkin on target proteins, such as RHOT1/MIRO1 and TOMM20, thereby blocking parkin's ability to drive mitophagy. Preferentially cleaves 'Lys-6'- and 'Lys-11'-linked polyubiquitin chains, 2 types of linkage that participate in mitophagic signaling. Does not cleave efficiently polyubiquitin phosphorylated at 'Ser-65'. Acts as negative regulator of mitochondrial fusion by mediating deubiquitination of MFN1 and MFN2. This Mus musculus (Mouse) protein is Ubiquitin carboxyl-terminal hydrolase 30 (Usp30).